The sequence spans 223 residues: tRNA (guanine-N(7)-)-methyltransferase (223 aa).

Asp56, Asp81, Asp108, and Asp130 together coordinate S-adenosyl-L-methionine. Asp130 is an active-site residue. Substrate-binding residues include Lys134 and Asp166.

This sequence belongs to the class I-like SAM-binding methyltransferase superfamily. TrmB family.

The enzyme catalyses guanosine(46) in tRNA + S-adenosyl-L-methionine = N(7)-methylguanosine(46) in tRNA + S-adenosyl-L-homocysteine. Its pathway is tRNA modification; N(7)-methylguanine-tRNA biosynthesis. Catalyzes the formation of N(7)-methylguanine at position 46 (m7G46) in tRNA. This is tRNA (guanine-N(7)-)-methyltransferase from Rubrobacter xylanophilus (strain DSM 9941 / JCM 11954 / NBRC 16129 / PRD-1).